A 713-amino-acid polypeptide reads, in one-letter code: Ribosomal RNA large subunit methyltransferase K/L (713 aa).

A THUMP domain is found at 43–154; the sequence is LAYRITLWTR…NGVITIAMNF (112 aa).

This sequence belongs to the methyltransferase superfamily. RlmKL family.

Its subcellular location is the cytoplasm. The catalysed reaction is guanosine(2445) in 23S rRNA + S-adenosyl-L-methionine = N(2)-methylguanosine(2445) in 23S rRNA + S-adenosyl-L-homocysteine + H(+). The enzyme catalyses guanosine(2069) in 23S rRNA + S-adenosyl-L-methionine = N(2)-methylguanosine(2069) in 23S rRNA + S-adenosyl-L-homocysteine + H(+). Specifically methylates the guanine in position 2445 (m2G2445) and the guanine in position 2069 (m7G2069) of 23S rRNA. The sequence is that of Ribosomal RNA large subunit methyltransferase K/L from Shewanella sp. (strain MR-4).